The following is a 475-amino-acid chain: MKKENITYGKVHQVIGPVVDVIFTESSQLPRIYDCLSVKLAGEELFLEAAQLIGDDIVRCIALGPTEGLARNEKVTNYNHPIEVPVGKNVLGRMFNVLGKPIDGKEELPKKPQLPIHRKPPSFDDQSNTLEIFETGIKVIDLLTPYARGGKIGLFGGAGVGKTVLVQELIHNIAKEHSGLSVFAGVGERTREGNDLYYEMIQGGVIDKTALVFGQMNEPPGARMRVALTALTMAEYFRDHDNQDVLLFIDNIFRFTQAGSEVSALLGRMPSAVGYQPTLATEMGQLQERIASTKTGSITSVQAIYVPADDLTDPAPATTFTHLDAKTVLDRNIAALGIFPAINPLESTSRLLDPNIVGINHYKVALGVQNILQRFAELQDIIAILGIDELADEDKIIVERARRIRNFLSQPFFVAEKFSGIAGKYVPLSDTIQSFKEILDGKHDDLPEQAFFFVGTIQEAVEKAKRLKKATVEEK.

156–163 (GGAGVGKT) is a binding site for ATP.

Belongs to the ATPase alpha/beta chains family. In terms of assembly, F-type ATPases have 2 components, CF(1) - the catalytic core - and CF(0) - the membrane proton channel. CF(1) has five subunits: alpha(3), beta(3), gamma(1), delta(1), epsilon(1). CF(0) has three main subunits: a(1), b(2) and c(9-12). The alpha and beta chains form an alternating ring which encloses part of the gamma chain. CF(1) is attached to CF(0) by a central stalk formed by the gamma and epsilon chains, while a peripheral stalk is formed by the delta and b chains.

The protein resides in the cell membrane. It carries out the reaction ATP + H2O + 4 H(+)(in) = ADP + phosphate + 5 H(+)(out). Functionally, produces ATP from ADP in the presence of a proton gradient across the membrane. The catalytic sites are hosted primarily by the beta subunits. In Mycoplasma pneumoniae (strain ATCC 29342 / M129 / Subtype 1) (Mycoplasmoides pneumoniae), this protein is ATP synthase subunit beta.